Here is a 445-residue protein sequence, read N- to C-terminus: Phenylacetate-coenzyme A ligase (445 aa).

It belongs to the phenylacetyl-CoA ligase family. Monomer.

It carries out the reaction 2-phenylacetate + ATP + CoA = phenylacetyl-CoA + AMP + diphosphate. Its pathway is aromatic compound metabolism; phenylacetate degradation. Functionally, catalyzes the activation of phenylacetic acid (PA) to phenylacetyl-CoA (PA-CoA). Involved in the phenylalanine metabolism. This chain is Phenylacetate-coenzyme A ligase, found in Thermus thermophilus (strain ATCC BAA-163 / DSM 7039 / HB27).